The primary structure comprises 205 residues: Proteasome subunit beta (205 aa).

Positions 1–9 are cleaved as a propeptide — removed in mature form; by autocatalysis; it reads MNQTENMEG. Threonine 10 acts as the Nucleophile in catalysis.

It belongs to the peptidase T1B family. As to quaternary structure, the 20S proteasome core is composed of 14 alpha and 14 beta subunits that assemble into four stacked heptameric rings, resulting in a barrel-shaped structure. The two inner rings, each composed of seven catalytic beta subunits, are sandwiched by two outer rings, each composed of seven alpha subunits. The catalytic chamber with the active sites is on the inside of the barrel. Has a gated structure, the ends of the cylinder being occluded by the N-termini of the alpha-subunits. Is capped at one or both ends by the proteasome regulatory ATPase, PAN.

The protein resides in the cytoplasm. The catalysed reaction is Cleavage of peptide bonds with very broad specificity.. The formation of the proteasomal ATPase PAN-20S proteasome complex, via the docking of the C-termini of PAN into the intersubunit pockets in the alpha-rings, triggers opening of the gate for substrate entry. Interconversion between the open-gate and close-gate conformations leads to a dynamic regulation of the 20S proteasome proteolysis activity. Functionally, component of the proteasome core, a large protease complex with broad specificity involved in protein degradation. In Methanosphaera stadtmanae (strain ATCC 43021 / DSM 3091 / JCM 11832 / MCB-3), this protein is Proteasome subunit beta.